A 506-amino-acid chain; its full sequence is TOM1-like protein 3 (506 aa).

A VHS domain is found at 12–141 (ATNDMLIGPD…ELRSAGIEFP (130 aa)). Positions 180–268 (DASALSMEEI…VLQHHDDKAK (89 aa)) constitute a GAT domain. 3 disordered regions span residues 266–328 (KAKG…PPSS), 351–384 (ETFE…SKSP), and 398–477 (EQLP…PEDI). The segment covering 288-298 (DDDDDESDDDF) has biased composition (acidic residues). Residue serine 294 is modified to Phosphoserine. Residues 358-368 (PPSTSQSSNHD) show a composition bias toward polar residues. Serine 383 is subject to Phosphoserine. Polar residues predominate over residues 450-460 (QSRNLSLNPTA). The span at 468–477 (PKKDDKPEDI) shows a compositional bias: basic and acidic residues.

This sequence belongs to the TOM1 family. Preferentially expressed in cauline leaves.

It localises to the membrane. Its function is as follows. Might contribute to the loading of the ESCRT machinery. In Arabidopsis thaliana (Mouse-ear cress), this protein is TOM1-like protein 3.